The following is a 294-amino-acid chain: Homeobox protein Nkx-2.5 (294 aa).

Disordered stretches follow at residues Gly48–Phe69 and Glu102–Pro122. Positions Pro52–Phe69 are enriched in pro residues. Residues Glu102–Pro114 are compositionally biased toward basic and acidic residues. Residues Arg119–Arg178 constitute a DNA-binding region (homeobox).

Belongs to the NK-2 homeobox family. Homodimer (via the homeobox); binds DNA as homodimer.

Its subcellular location is the nucleus. In terms of biological role, transcription factor required for the development of the heart and the spleen. Implicated in commitment to and/or differentiation of the myocardial lineage. Binds to the core DNA motif of promoter. The protein is Homeobox protein Nkx-2.5 (NKX-2.5) of Gallus gallus (Chicken).